Here is a 231-residue protein sequence, read N- to C-terminus: Ureidoacrylate amidohydrolase RutB (231 aa).

Asp25 acts as the Proton acceptor in catalysis. The active site involves Lys134. The Nucleophile role is filled by Cys167.

Belongs to the isochorismatase family. RutB subfamily.

It catalyses the reaction (Z)-3-ureidoacrylate + H2O + H(+) = (Z)-3-aminoacrylate + NH4(+) + CO2. It carries out the reaction (Z)-3-ureidoacrylate + H2O = (Z)-3-aminoacrylate + carbamate + H(+). The enzyme catalyses (Z)-2-methylureidoacrylate + H2O + H(+) = (Z)-2-methylaminoacrylate + NH4(+) + CO2. In terms of biological role, hydrolyzes ureidoacrylate to form aminoacrylate and carbamate. The carbamate hydrolyzes spontaneously, thereby releasing one of the nitrogen atoms of the pyrimidine ring as ammonia and one of its carbon atoms as CO2. The polypeptide is Ureidoacrylate amidohydrolase RutB (Escherichia coli (strain SMS-3-5 / SECEC)).